We begin with the raw amino-acid sequence, 421 residues long: Subtilisin-like protease 2 (421 aa).

Positions 1 to 16 (MQLLNFGLLLLPFVAG) are cleaved as a signal peptide. Residues 17–122 (DLAPQPEPLL…VHPDQHVYLA (106 aa)) constitute a propeptide that is removed on maturation. Residues 36–122 (QYIVTLKEGL…VHPDQHVYLA (87 aa)) form the Inhibitor I9 domain. Residues 131-421 (RWGLGYMSSK…ERKFTLPKYF (291 aa)) enclose the Peptidase S8 domain. Catalysis depends on charge relay system residues aspartate 169 and histidine 201. N-linked (GlcNAc...) asparagine glycans are attached at residues asparagine 248, asparagine 261, and asparagine 348. The active-site Charge relay system is serine 357. Asparagine 388 is a glycosylation site (N-linked (GlcNAc...) asparagine).

This sequence belongs to the peptidase S8 family.

The protein localises to the secreted. In terms of biological role, secreted subtilisin-like serine protease with keratinolytic activity that contributes to pathogenicity. The chain is Subtilisin-like protease 2 (SUB2) from Trichophyton tonsurans (Scalp ringworm fungus).